Here is a 712-residue protein sequence, read N- to C-terminus: Envelope glycoprotein gp160 (712 aa).

Residues 1–24 form the signal peptide; the sequence is MCGRNQLFVASLLASACLIYCVQY. Topologically, residues 25–673 are extracellular; the sequence is VTVFYGVPVW…LTSWIKYIQY (649 aa). The N-linked (GlcNAc...) asparagine; by host glycan is linked to Asn-36. A disulfide bridge links Cys-43 with Cys-56. N-linked (GlcNAc...) asparagine; by host glycosylation is found at Asn-69, Asn-78, Asn-113, Asn-119, Asn-131, Asn-137, Asn-145, Asn-160, Asn-173, Asn-200, Asn-232, Asn-235, Asn-242, Asn-266, Asn-272, Asn-283, Asn-294, Asn-304, Asn-359, Asn-392, Asn-402, Asn-405, Asn-442, Asn-457, and Asn-460. Intrachain disulfides connect Cys-100–Cys-208, Cys-107–Cys-199, Cys-112–Cys-157, Cys-221–Cys-251, and Cys-231–Cys-243. Positions 112-156 are V1; sequence CNSTTAKNTTSTPTTTTTANTTIGENSSCIRTDNCTGLGEEEMVD. A V2 region spans residues 157-199; that stretch reads CQFNMTGLERDKKKLYNETWYSKDVVCESKDTKKEKTCYMNHC. The segment at 299-331 is V3; that stretch reads CKRPGNKTVVPITLMSGLVFHSQPINRRPRQAW. Residues Cys-299 and Cys-332 are joined by a disulfide bond. 2 disulfides stabilise this stretch: Cys-384-Cys-441 and Cys-391-Cys-414. The segment at 391–414 is V4; sequence CNMTWFLNWVENRTNQTQHNYVPC. The interval 457-463 is V5; that stretch reads NQTNITF. The segment at 506–526 is fusion peptide; sequence GVFVLGFLGFLTTAGAAMGAA. The tract at residues 569 to 585 is immunosuppression; sequence LQARVTAIEKYLKDQAQ. Residues Asn-605, Asn-614, and Asn-630 are each glycosylated (N-linked (GlcNAc...) asparagine; by host). A coiled-coil region spans residues 614–646; that stretch reads NITWQEWEQRIRNLEANISESLEQAQIQQEKNM. The tract at residues 651-672 is MPER; binding to GalCer; the sequence is KLNSWDVFSNWFDLTSWIKYIQ. A helical membrane pass occupies residues 674–694; the sequence is GVYIVVGIIVLRMVIYVVQML. The Cytoplasmic segment spans residues 695–712; it reads SRLRKGYRPVFSSPPAYS. The YXXV motif; contains endocytosis signal signature appears at 701–704; it reads YRPV.

In terms of assembly, the mature envelope protein (Env) consists of a homotrimer of non-covalently associated gp120-gp41 heterodimers. The resulting complex protrudes from the virus surface as a spike. There seems to be as few as 10 spikes on the average virion. Interacts with human CD4, CCR5 and CXCR4, to form a P4HB/PDI-CD4-CXCR4-gp120 complex. Gp120 also interacts with the C-type lectins CD209/DC-SIGN and CLEC4M/DC-SIGNR (collectively referred to as DC-SIGN(R)). Gp120 and gp41 interact with GalCer. As to quaternary structure, the mature envelope protein (Env) consists of a homotrimer of non-covalently associated gp120-gp41 heterodimers. The resulting complex protrudes from the virus surface as a spike. There seems to be as few as 10 spikes on the average virion. Post-translationally, specific enzymatic cleavages in vivo yield mature proteins. Envelope glycoproteins are synthesized as an inactive precursor that is heavily N-glycosylated and processed likely by host cell furin in the Golgi to yield the mature SU and TM proteins. The cleavage site between SU and TM requires the minimal sequence [KR]-X-[KR]-R.

It is found in the virion membrane. The protein localises to the host cell membrane. The protein resides in the host endosome membrane. Functionally, the surface protein gp120 (SU) attaches the virus to the host lymphoid cell by binding to the primary receptor CD4. This interaction induces a structural rearrangement creating a high affinity binding site for a chemokine coreceptor like CXCR4 and/or CCR5. This peculiar 2 stage receptor-interaction strategy allows gp120 to maintain the highly conserved coreceptor-binding site in a cryptic conformation, protected from neutralizing antibodies. Since CD4 also displays a binding site for the disulfide-isomerase P4HB/PDI, a P4HB/PDI-CD4-CXCR4-gp120 complex may form. In that complex, P4HB/PDI could reach and reduce gp120 disulfide bonds, causing major conformational changes in gp120. TXN, another PDI family member could also be involved in disulfide rearrangements in Env during fusion. These changes are transmitted to the transmembrane protein gp41 and are thought to activate its fusogenic potential by unmasking its fusion peptide. In terms of biological role, the surface protein gp120 is a ligand for CD209/DC-SIGN and CLEC4M/DC-SIGNR, which are respectively found on dendritic cells (DCs), and on endothelial cells of liver sinusoids and lymph node sinuses. These interactions allow capture of viral particles at mucosal surfaces by these cells and subsequent transmission to permissive cells. DCs are professional antigen presenting cells, critical for host immunity by inducing specific immune responses against a broad variety of pathogens. They act as sentinels in various tissues where they take up antigen, process it, and present it to T-cells following migration to lymphoid organs. HIV subverts the migration properties of dendritic cells to gain access to CD4+ T-cells in lymph nodes. Virus transmission to permissive T-cells occurs either in trans (without DCs infection, through viral capture and transmission), or in cis (following DCs productive infection, through the usual CD4-gp120 interaction), thereby inducing a robust infection. In trans infection, bound virions remain infectious over days and it is proposed that they are not degraded, but protected in non-lysosomal acidic organelles within the DCs close to the cell membrane thus contributing to the viral infectious potential during DCs' migration from the periphery to the lymphoid tissues. On arrival at lymphoid tissues, intact virions recycle back to DCs' cell surface allowing virus transmission to CD4+ T-cells. Virion capture also seems to lead to MHC-II-restricted viral antigen presentation, and probably to the activation of HIV-specific CD4+ cells. The transmembrane protein gp41 (TM) acts as a class I viral fusion protein. Under the current model, the protein has at least 3 conformational states: pre-fusion native state, pre-hairpin intermediate state, and post-fusion hairpin state. During fusion of viral and target intracellular membranes, the coiled coil regions (heptad repeats) assume a trimer-of-hairpins structure, positioning the fusion peptide in close proximity to the C-terminal region of the ectodomain. The formation of this structure appears to drive apposition and subsequent fusion of viral and target cell membranes. Complete fusion occurs in host cell endosomes and is dynamin-dependent, however some lipid transfer might occur at the plasma membrane. The virus undergoes clathrin-dependent internalization long before endosomal fusion, thus minimizing the surface exposure of conserved viral epitopes during fusion and reducing the efficacy of inhibitors targeting these epitopes. Membranes fusion leads to delivery of the nucleocapsid into the cytoplasm. Its function is as follows. The envelope glycoprotein gp160 precursor down-modulates cell surface CD4 antigen by interacting with it in the endoplasmic reticulum and blocking its transport to the cell surface. Functionally, the gp120-gp41 heterodimer seems to contribute to T-cell depletion during HIV-1 infection. The envelope glycoproteins expressed on the surface of infected cells induce apoptosis through an interaction with uninfected cells expressing the receptor (CD4) and the coreceptors CXCR4 or CCR5. This type of bystander killing may be obtained by at least three distinct mechanisms. First, the interaction between the 2 cells can induce cellular fusion followed by nuclear fusion within the syncytium. Syncytia are condemned to die from apoptosis. Second, the 2 interacting cells may not fuse entirely and simply exchange plasma membrane lipids, after a sort of hemifusion process, followed by rapid death. Third, it is possible that virus-infected cells, on the point of undergoing apoptosis, fuse with CD4-expressing cells, in which case apoptosis is rapidly transmitted from one cell to the other and thus occurs in a sort of contagious fashion. In terms of biological role, the gp120-gp41 heterodimer allows rapid transcytosis of the virus through CD4 negative cells such as simple epithelial monolayers of the intestinal, rectal and endocervical epithelial barriers. Both gp120 and gp41 specifically recognize glycosphingolipids galactosyl-ceramide (GalCer) or 3' sulfo-galactosyl-ceramide (GalS) present in the lipid rafts structures of epithelial cells. Binding to these alternative receptors allows the rapid transcytosis of the virus through the epithelial cells. This transcytotic vesicle-mediated transport of virions from the apical side to the basolateral side of the epithelial cells does not involve infection of the cells themselves. The polypeptide is Envelope glycoprotein gp160 (env) (Homo sapiens (Human)).